The sequence spans 182 residues: Peptidyl-tRNA hydrolase (182 aa).

Position 14 (Tyr14) interacts with tRNA. Residue His19 is the Proton acceptor of the active site. 3 residues coordinate tRNA: Phe60, Asn62, and Asn106.

This sequence belongs to the PTH family. As to quaternary structure, monomer.

Its subcellular location is the cytoplasm. It carries out the reaction an N-acyl-L-alpha-aminoacyl-tRNA + H2O = an N-acyl-L-amino acid + a tRNA + H(+). Hydrolyzes ribosome-free peptidyl-tRNAs (with 1 or more amino acids incorporated), which drop off the ribosome during protein synthesis, or as a result of ribosome stalling. In terms of biological role, catalyzes the release of premature peptidyl moieties from peptidyl-tRNA molecules trapped in stalled 50S ribosomal subunits, and thus maintains levels of free tRNAs and 50S ribosomes. The sequence is that of Peptidyl-tRNA hydrolase from Campylobacter concisus (strain 13826).